A 442-amino-acid polypeptide reads, in one-letter code: HTH-type transcriptional regulator NorG (442 aa).

The 45-residue stretch at 2–46 (KIPPQRQLAIQYNVNRVTIIKSIELLEAEGFIYTKVGSGTYVNDY) folds into the HTH gntR-type domain. Residues 6–25 (QRQLAIQYNVNRVTIIKSIE) constitute a DNA-binding region (H-T-H motif). K288 is subject to N6-(pyridoxal phosphate)lysine.

It in the C-terminal section; belongs to the class-I pyridoxal-phosphate-dependent aminotransferase family. The cofactor is pyridoxal 5'-phosphate.

Functionally, positively regulates the expression of the NorB efflux pump and negatively regulates the expression of the AbcA efflux pump. Binds specifically to the promoters of norA, norB and norC and abcA genes. Could also have an aminotransferase activity. In Staphylococcus aureus (strain Mu50 / ATCC 700699), this protein is HTH-type transcriptional regulator NorG (norG).